The following is a 127-amino-acid chain: Holo-[acyl-carrier-protein] synthase (127 aa).

2 residues coordinate Mg(2+): Asp7 and Glu56.

The protein belongs to the P-Pant transferase superfamily. AcpS family. The cofactor is Mg(2+).

The protein resides in the cytoplasm. The catalysed reaction is apo-[ACP] + CoA = holo-[ACP] + adenosine 3',5'-bisphosphate + H(+). In terms of biological role, transfers the 4'-phosphopantetheine moiety from coenzyme A to a Ser of acyl-carrier-protein. In Leptospira biflexa serovar Patoc (strain Patoc 1 / Ames), this protein is Holo-[acyl-carrier-protein] synthase.